We begin with the raw amino-acid sequence, 164 residues long: Transcription elongation factor GreA (164 aa).

Residues 50–75 (YHAAREEQGQQEARIRQLQDLLNIAK) adopt a coiled-coil conformation.

This sequence belongs to the GreA/GreB family.

Functionally, necessary for efficient RNA polymerase transcription elongation past template-encoded arresting sites. The arresting sites in DNA have the property of trapping a certain fraction of elongating RNA polymerases that pass through, resulting in locked ternary complexes. Cleavage of the nascent transcript by cleavage factors such as GreA or GreB allows the resumption of elongation from the new 3'terminus. GreA releases sequences of 2 to 3 nucleotides. In Mycobacterium leprae (strain Br4923), this protein is Transcription elongation factor GreA.